The following is a 1600-amino-acid chain: Eukaryotic translation initiation factor 4 gamma 1 (1600 aa).

The tract at residues 1 to 88 (MNKAPQPTGP…ARPGPAPHVY (88 aa)) is disordered. Pro residues predominate over residues 7–24 (PTGPPPARSPGLPQPAFP). Serine 15 is subject to Phosphoserine. Positions 34–48 (STPQATQMNTPSQPR) are enriched in polar residues. Residues 60 to 79 (PSRAQPPSSAASRVQSAAPA) are compositionally biased toward low complexity. An omega-N-methylarginine mark is found at arginine 80 and arginine 117. Disordered regions lie at residues 173–230 (NQPP…NGES), 243–326 (SQGA…LSPE), 366–501 (ETHE…QLSQ), 507–526 (AATQ…KELN), and 541–606 (VDPA…DQWK). The segment at 179–207 (APKRERKTIRIRDPNQGGKDITEEIMSGA) is PABPC1-binding. Positions 208-220 (RTASTPTPPQTGG) are enriched in polar residues. Threonine 214 is subject to Phosphothreonine. Serine 230 carries the post-translational modification Phosphoserine. The span at 269–280 (SPSPTPSPPPIL) shows a compositional bias: pro residues. Residue serine 324 is modified to Phosphoserine. Over residues 438-449 (KVSSAALASILS) the composition is skewed to low complexity. Over residues 463–479 (QEEEMEEDDDDEEGGEA) the composition is skewed to acidic residues. Residues 551 to 562 (QPPTGSNPSPES) show a composition bias toward polar residues. Basic and acidic residues-rich tracts occupy residues 578-587 (WDSKEDKIHN) and 596-606 (QKYEYKSDQWK). Position 606 is an N6-acetyllysine (lysine 606). Residues 611-622 (EEKKRYDREFLL) form an EIF4E-binding region. Phosphothreonine is present on threonine 651. Disordered regions lie at residues 667–719 (GPDF…TRKI) and 734–760 (AEKA…DGSK). The segment at 686-1089 (GPPRGGPGGE…GSIDSNNQLF (404 aa)) is eIF3/EIF4A-binding. Residues arginine 689 and arginine 698 each carry the omega-N-methylarginine modification. Over residues 697 to 707 (PRGPAGLGPRR) the composition is skewed to low complexity. Basic and acidic residues predominate over residues 745 to 760 (TAADKDRGEEDADGSK). One can recognise an MIF4G domain in the interval 765–993 (FRRVRSILNK…QDVLDLRQSN (229 aa)). Disordered regions lie at residues 1029-1117 (AKGS…SEAT) and 1129-1238 (QQTL…AALS). At serine 1032 the chain carries Phosphoserine. 2 positions are modified to omega-N-methylarginine: arginine 1036 and arginine 1046. Phosphoserine is present on residues serine 1081 and serine 1096. Lysine 1099 bears the N6-acetyllysine mark. Residues serine 1147 and serine 1149 each carry the phosphoserine modification. A compositionally biased stretch (basic and acidic residues) spans 1148–1180 (LSRERGEKAGDRGDRLERSERGGDRGDRLDRAR). Serine 1187 carries the post-translational modification Phosphoserine; by PKC/PRKCA. Over residues 1188–1225 (FSKEVEERSRERPSQPEGLRKAASLTEDRGRDPVKREA) the composition is skewed to basic and acidic residues. Phosphoserine occurs at positions 1189, 1196, and 1211. Threonine 1213 bears the Phosphothreonine mark. 2 positions are modified to phosphoserine: serine 1231 and serine 1238. The MI domain maps to 1241–1363 (EVEKKSKAII…PMGELFREIT (123 aa)). The W2 domain maps to 1429-1599 (ESEAPGQRTL…REAEDEESDH (171 aa)). Residues 1450 to 1600 (LLKDGGSNQR…EAEDEESDHN (151 aa)) form an EIF4A-binding region. The segment at 1585–1600 (FFNWLREAEDEESDHN) is necessary but not sufficient for MKNK1-binding. Serine 1597 is modified (phosphoserine).

Belongs to the eukaryotic initiation factor 4G family. As to quaternary structure, eIF4F is a multi-subunit complex, the composition of which varies with external and internal environmental conditions. It is composed of at least EIF4A, EIF4E (cap-binding) and EIF4G1/EIF4G3. Interacts with eIF3 complex, mutually exclusive with EIF4A1 or EIF4A2, EIF4E and through its N-terminus with PABPC1. Interacts with EIF4E or with EIF1 (mutually exclusive) through a common binding site. Interacts through its C-terminus with the serine/threonine kinases MKNK1, and with MKNK2. Appears to act as a scaffold protein, holding these enzymes in place to phosphorylate EIF4E. Non-phosphorylated EIF4EBP1 competes with EIF4G1/EIF4G3 to interact with EIF4E; insulin stimulated MAP-kinase (MAPK1 and MAPK3) phosphorylation of EIF4EBP1 causes dissociation of the complex allowing EIF4G1/EIF4G3 to bind and consequent initiation of translation. EIF4G1/EIF4G3 interacts with PABPC1 to bring about circularization of the mRNA. Interacts with EIF4E3. Interacts with CIRBP and MIF4GD. Interacts with RBM4. Interacts with HNRNPD/AUF1; the interaction requires RNA. Interacts with DDX3X; the interaction requires RNA. Interacts with DAZAP2. (Microbial infection) Interacts with murine norovirus viral genome-linked protein (via C-terminus); this interaction plays a role in translation of viral proteins. Phosphorylated at multiple sites in vivo. Phosphorylation at Ser-1187 by PRKCA induces binding to MKNK1.

It is found in the cytoplasm. The protein resides in the nucleus. Its subcellular location is the stress granule. Functionally, component of the protein complex eIF4F, which is involved in the recognition of the mRNA cap, ATP-dependent unwinding of 5'-terminal secondary structure and recruitment of mRNA to the ribosome. Exists in two complexes, either with EIF1 or with EIF4E (mutually exclusive). Together with EIF1, is required for leaky scanning, in particular for avoiding cap-proximal start codon. Together with EIF4E, antagonizes the scanning promoted by EIF1-EIF4G1 and locates the start codon (through a TISU element) without scanning. As a member of the eIF4F complex, required for endoplasmic reticulum stress-induced ATF4 mRNA translation. This Mus musculus (Mouse) protein is Eukaryotic translation initiation factor 4 gamma 1 (Eif4g1).